A 357-amino-acid polypeptide reads, in one-letter code: Holliday junction branch migration complex subunit RuvB (357 aa).

Residues 1–15 show a composition bias toward low complexity; it reads MAIQSDSLSSLPDSP. Positions 1-30 are disordered; sequence MAIQSDSLSSLPDSPRIVAPQPVSPNEESI. The large ATPase domain (RuvB-L) stretch occupies residues 13–195; sequence DSPRIVAPQP…FGIVSRLEFY (183 aa). Residues L34, R35, G76, K79, T80, T81, 142-144, R185, Y195, and R232 each bind ATP; that span reads EDF. T80 lines the Mg(2+) pocket. The tract at residues 196–266 is small ATPAse domain (RuvB-S); the sequence is NTDELARIVT…AAGRALAMLD (71 aa). Positions 269-357 are head domain (RuvB-H); sequence PQGLDVMDRK…SGGTGELFSK (89 aa). Positions 305, 324, and 329 each coordinate DNA.

It belongs to the RuvB family. Homohexamer. Forms an RuvA(8)-RuvB(12)-Holliday junction (HJ) complex. HJ DNA is sandwiched between 2 RuvA tetramers; dsDNA enters through RuvA and exits via RuvB. An RuvB hexamer assembles on each DNA strand where it exits the tetramer. Each RuvB hexamer is contacted by two RuvA subunits (via domain III) on 2 adjacent RuvB subunits; this complex drives branch migration. In the full resolvosome a probable DNA-RuvA(4)-RuvB(12)-RuvC(2) complex forms which resolves the HJ.

Its subcellular location is the cytoplasm. The catalysed reaction is ATP + H2O = ADP + phosphate + H(+). In terms of biological role, the RuvA-RuvB-RuvC complex processes Holliday junction (HJ) DNA during genetic recombination and DNA repair, while the RuvA-RuvB complex plays an important role in the rescue of blocked DNA replication forks via replication fork reversal (RFR). RuvA specifically binds to HJ cruciform DNA, conferring on it an open structure. The RuvB hexamer acts as an ATP-dependent pump, pulling dsDNA into and through the RuvAB complex. RuvB forms 2 homohexamers on either side of HJ DNA bound by 1 or 2 RuvA tetramers; 4 subunits per hexamer contact DNA at a time. Coordinated motions by a converter formed by DNA-disengaged RuvB subunits stimulates ATP hydrolysis and nucleotide exchange. Immobilization of the converter enables RuvB to convert the ATP-contained energy into a lever motion, pulling 2 nucleotides of DNA out of the RuvA tetramer per ATP hydrolyzed, thus driving DNA branch migration. The RuvB motors rotate together with the DNA substrate, which together with the progressing nucleotide cycle form the mechanistic basis for DNA recombination by continuous HJ branch migration. Branch migration allows RuvC to scan DNA until it finds its consensus sequence, where it cleaves and resolves cruciform DNA. In Bordetella pertussis (strain Tohama I / ATCC BAA-589 / NCTC 13251), this protein is Holliday junction branch migration complex subunit RuvB.